Reading from the N-terminus, the 102-residue chain is Small ribosomal subunit protein uS10 (102 aa).

Belongs to the universal ribosomal protein uS10 family. In terms of assembly, part of the 30S ribosomal subunit.

In terms of biological role, involved in the binding of tRNA to the ribosomes. This is Small ribosomal subunit protein uS10 from Bacillus cereus (strain G9842).